The primary structure comprises 463 residues: Steroidogenic factor 1 (463 aa).

The nuclear receptor DNA-binding region spans 10-85 (DELCPVCGDK…VGMRLEAVRA (76 aa)). Residues 13 to 33 (CPVCGDKVSGYHYGLLTCESC) form an NR C4-type zinc finger. Residues K34, K38, and K72 each carry the N6-acetyllysine modification. Residues 49-73 (CTESQNCKIDKTQRKRCPYCRFQKC) form an NR C4-type zinc finger. A Glycyl lysine isopeptide (Lys-Gly) (interchain with G-Cter in SUMO) cross-link involves residue K119. The disordered stretch occupies residues 119-160 (KLETGPSMGPPPQTDYPLAPALHPGAKGLAPAPPAGPPGDYE). A compositionally biased stretch (low complexity) spans 135-148 (PLAPALHPGAKGLA). K193 is covalently cross-linked (Glycyl lysine isopeptide (Lys-Gly) (interchain with G-Cter in SUMO)). A disordered region spans residues 197-216 (PEPYASPHEPAPPYGYPEPY). Phosphoserine; by CDK7 is present on S202. Pro residues predominate over residues 205-216 (EPAPPYGYPEPY). An NR LBD domain is found at 224–461 (GVPELILKLL…NLLIEMLHAK (238 aa)). The a 1,2-diacyl-sn-glycero-3-phosphocholine site is built by G343, Y438, and K442.

The protein belongs to the nuclear hormone receptor family. NR5 subfamily. Binds DNA as a monomer. Part of a complex consisting of SFPQ, NONO and NR5A1. Interacts with NR0B2, NCOA2 and PPARGC1A. Interacts with DGKQ and CDK7. Binds to and activated by HIPK3. Acetylation stimulates the transcriptional activity. In terms of processing, sumoylation reduces CDK7-mediated phosphorylation on Ser-202. Post-translationally, phosphorylated on Ser-202 by CDK7. This phosphorylation promotes transcriptional activity. In terms of tissue distribution, expressed in the pre-granulosa and Sertoli cells of the ovary and testis, respectively. In the testis it is also present in the interstitial cells. In the adult ovary it is expressed in the interstitial gland, and in the granulosa cells and theca interna of small to medium-sized antral follicles, but is not expressed in large antral follicles.

The protein resides in the nucleus. Its function is as follows. Transcriptional activator. Seems to be essential for sexual differentiation and formation of the primary steroidogenic tissues. Binds to the Ad4 site found in the promoter region of steroidogenic P450 genes such as CYP11A, CYP11B and CYP21B. Also regulates the AMH/Muellerian inhibiting substance gene as well as the AHCH and STAR genes. 5'-YCAAGGYC-3' and 5'-RRAGGTCA-3' are the consensus sequences for the recognition by NR5A1. The SFPQ-NONO-NR5A1 complex binds to the CYP17 promoter and regulates basal and cAMP-dependent transcriptional activity. Binds phosphatidylcholine and phospholipids with a phosphatidylinositol (PI) headgroup, in particular PI(3,4)P2 and PI(3,4,5)P3. Activated by the phosphorylation of NR5A1 by HIPK3 leading to increased steroidogenic gene expression upon cAMP signaling pathway stimulation. This is Steroidogenic factor 1 (NR5A1) from Notamacropus eugenii (Tammar wallaby).